The chain runs to 239 residues: MRQSGRKSNQLRPISLELSPLINAEGSCLIKIGNTHVMCSATCETTVPPFLRGQNQGWITAEYGMLPGSTSQRIKREAALGKQGGRTQEIQRLIGRAMRCVIDVRKLGERQIIIDCDVINADGGTRTAAITGSYVALHLAIRSLMKKRVLKVNPLISQIAAISCGIYKGEAILDLDYLEDSDADVDSNFVFAGNGNLIEVQGTAEKNPFSEEQFLAMLKLAKGGAAELFKLQNQVLLGS.

Residues arginine 86 and 124-126 each bind phosphate; that span reads GTR.

This sequence belongs to the RNase PH family. In terms of assembly, homohexameric ring arranged as a trimer of dimers.

It carries out the reaction tRNA(n+1) + phosphate = tRNA(n) + a ribonucleoside 5'-diphosphate. Its function is as follows. Phosphorolytic 3'-5' exoribonuclease that plays an important role in tRNA 3'-end maturation. Removes nucleotide residues following the 3'-CCA terminus of tRNAs; can also add nucleotides to the ends of RNA molecules by using nucleoside diphosphates as substrates, but this may not be physiologically important. Probably plays a role in initiation of 16S rRNA degradation (leading to ribosome degradation) during starvation. In Rickettsia africae (strain ESF-5), this protein is Ribonuclease PH.